The sequence spans 314 residues: Solute carrier family 25 member 44 (314 aa).

3 Solcar repeats span residues 18–100 (KKFY…TRKF), 107–210 (SNTV…YAEQ), and 220–302 (PHIV…LKKL). 6 helical membrane passes run 20–42 (FYVF…TLIR), 71–90 (TGLY…GQCY), 113–133 (LVAG…IDVV), 185–201 (GYVA…AVWW), 222–239 (IVFQ…ASIL), and 278–296 (LSAR…VVGY).

The protein belongs to the mitochondrial carrier (TC 2.A.29) family.

It localises to the mitochondrion membrane. The enzyme catalyses L-valine(in) = L-valine(out). It catalyses the reaction L-leucine(in) = L-leucine(out). Mitochondrial solute transporter which transports branched-chain amino acid (BCAA; valine, leucine and isoleucine) into mitochondria in brown adipose tissue (BAT). BAT is involved in BCAA catabolism and actively utilizes BCAA in the mitochondria for thermogenesis. This chain is Solute carrier family 25 member 44, found in Pongo abelii (Sumatran orangutan).